Reading from the N-terminus, the 426-residue chain is GTPase Obg (426 aa).

Positions 1–158 (MFVDQVSVYV…RNIKVELKLI (158 aa)) constitute an Obg domain. 2 disordered regions span residues 66-86 (GKRG…DPLV) and 119-146 (GGRG…GEPG). The 171-residue stretch at 159–329 (ADVGLVGFPS…LLFAIADKLE (171 aa)) folds into the OBG-type G domain. Residues 165 to 172 (GFPSVGKS), 190 to 194 (FTTLS), 212 to 215 (DLPG), 282 to 285 (NKMD), and 310 to 312 (SAL) each bind GTP. Mg(2+) is bound by residues Ser172 and Thr192. Residues 348 to 426 (RYQKEEDPFH…LLEYEFEFIE (79 aa)) enclose the OCT domain.

This sequence belongs to the TRAFAC class OBG-HflX-like GTPase superfamily. OBG GTPase family. As to quaternary structure, monomer. Mg(2+) is required as a cofactor.

The protein resides in the cytoplasm. Its function is as follows. An essential GTPase which binds GTP, GDP and possibly (p)ppGpp with moderate affinity, with high nucleotide exchange rates and a fairly low GTP hydrolysis rate. Plays a role in control of the cell cycle, stress response, ribosome biogenesis and in those bacteria that undergo differentiation, in morphogenesis control. This Oceanobacillus iheyensis (strain DSM 14371 / CIP 107618 / JCM 11309 / KCTC 3954 / HTE831) protein is GTPase Obg.